A 511-amino-acid chain; its full sequence is MQKIIEINGSNLTIEDVVAVARYGAKVKLDEKQKDKILESRKYVEEALSNKMPIYGINTGFGKFENVPISEEELELLQKNLIYSDACGVGEAFDTEIVRAMMILRANAISKGFSGVMIETVECLLNMLNAGVHPIVRSKGSVGSSGDLCPLAHMVLPMIGEGEAEYKGEILSGKEAMKKAGVSTITLKAKEGLALINGTQAMMGNAVLAVYDAEKLLKQADIVASLSIDALGGIIDAFDERIHLIRPHKGQIYSAENLRKLLKGSKRTTRQGEKRMQDAYSLRCTPQVHGASRLAFDYVKQTVETEINSVTDNPLIFPGENGACISGGNFHGQPIAIAMDTLGILMSEIANISERRIEKLVNPALSHGLPAFLVKNGGINDGFMIPQYVAAALVSENKVLAHPASVDSIPTSANQEDHVSMGTIGARKARTIVDHAQHVVSIELLCAAQAADFWDSKNLGVGTKEAYRTLREKVDFMENDVIFYPLMDKSFEIIKSAILLANVEKIIGLLK.

A cross-link (5-imidazolinone (Ser-Gly)) is located at residues 144–146 (SSG). A 2,3-didehydroalanine (Ser) modification is found at Ser-145.

This sequence belongs to the PAL/histidase family. In terms of processing, contains an active site 4-methylidene-imidazol-5-one (MIO), which is formed autocatalytically by cyclization and dehydration of residues Ser-Ser-Gly.

The protein localises to the cytoplasm. It catalyses the reaction L-histidine = trans-urocanate + NH4(+). It functions in the pathway amino-acid degradation; L-histidine degradation into L-glutamate; N-formimidoyl-L-glutamate from L-histidine: step 1/3. This chain is Histidine ammonia-lyase 2 (hutH2), found in Fusobacterium nucleatum subsp. nucleatum (strain ATCC 25586 / DSM 15643 / BCRC 10681 / CIP 101130 / JCM 8532 / KCTC 2640 / LMG 13131 / VPI 4355).